The chain runs to 414 residues: Calcium/calmodulin-dependent protein kinase cmkA (414 aa).

One can recognise a Protein kinase domain in the interval 23–278; that stretch reads YRFGRTLGAG…SEEALKHPWL (256 aa). ATP-binding positions include 29-37 and Lys50; that span reads LGAGTYGIV. The active-site Proton acceptor is Asp142. Residues 278–314 are autoinhibitory domain; that stretch reads LKGESASDRDLLPEIRAYIARSRLKRGIEIIKLANRI. The segment at 293-315 is calmodulin-binding; sequence RAYIARSRLKRGIEIIKLANRIE. Disordered stretches follow at residues 320 to 375 and 394 to 414; these read QEED…KRSL and EMKENEEREKVEREARERAHS. The span at 351–364 shows a compositional bias: polar residues; it reads STENSNTHPASTGN.

This sequence belongs to the protein kinase superfamily. CAMK Ser/Thr protein kinase family. CaMK subfamily. Monomer. In terms of processing, autophosphorylated in a calcium/calmodulin-dependent manner.

It catalyses the reaction L-seryl-[protein] + ATP = O-phospho-L-seryl-[protein] + ADP + H(+). The enzyme catalyses L-threonyl-[protein] + ATP = O-phospho-L-threonyl-[protein] + ADP + H(+). Its activity is regulated as follows. Activated by Ca(2+)/calmodulin. Binding of calmodulin may relieve intrasteric autoinhibition. Functionally, calcium/calmodulin-dependent protein kinase. Required in nuclear division cycle for progression from G2 to mitosis. Required for hyphal growth. The sequence is that of Calcium/calmodulin-dependent protein kinase cmkA (cmkA) from Emericella nidulans (strain FGSC A4 / ATCC 38163 / CBS 112.46 / NRRL 194 / M139) (Aspergillus nidulans).